Here is a 329-residue protein sequence, read N- to C-terminus: Biotin synthase (329 aa).

Positions 38-262 (NTIQVSTLLS…IMPHSYIRLS (225 aa)) constitute a Radical SAM core domain. [4Fe-4S] cluster is bound by residues Cys53, Cys57, and Cys60. [2Fe-2S] cluster contacts are provided by Cys97, Cys128, Cys188, and Arg260.

It belongs to the radical SAM superfamily. Biotin synthase family. As to quaternary structure, homodimer. Requires [4Fe-4S] cluster as cofactor. [2Fe-2S] cluster serves as cofactor.

It catalyses the reaction (4R,5S)-dethiobiotin + (sulfur carrier)-SH + 2 reduced [2Fe-2S]-[ferredoxin] + 2 S-adenosyl-L-methionine = (sulfur carrier)-H + biotin + 2 5'-deoxyadenosine + 2 L-methionine + 2 oxidized [2Fe-2S]-[ferredoxin]. The protein operates within cofactor biosynthesis; biotin biosynthesis; biotin from 7,8-diaminononanoate: step 2/2. Catalyzes the conversion of dethiobiotin (DTB) to biotin by the insertion of a sulfur atom into dethiobiotin via a radical-based mechanism. The protein is Biotin synthase of Acinetobacter calcoaceticus.